The primary structure comprises 573 residues: Phosphoenolpyruvate-protein phosphotransferase (573 aa).

His-190 (tele-phosphohistidine intermediate) is an active-site residue. Positions 297 and 334 each coordinate phosphoenolpyruvate. 2 residues coordinate Mg(2+): Glu-433 and Asp-457. Phosphoenolpyruvate is bound by residues 456–457 and Arg-467; that span reads ND. Catalysis depends on Cys-504, which acts as the Proton donor.

It belongs to the PEP-utilizing enzyme family. Homodimer. Requires Mg(2+) as cofactor.

Its subcellular location is the cytoplasm. It catalyses the reaction L-histidyl-[protein] + phosphoenolpyruvate = N(pros)-phospho-L-histidyl-[protein] + pyruvate. In terms of biological role, general (non sugar-specific) component of the phosphoenolpyruvate-dependent sugar phosphotransferase system (sugar PTS). This major carbohydrate active-transport system catalyzes the phosphorylation of incoming sugar substrates concomitantly with their translocation across the cell membrane. Enzyme I transfers the phosphoryl group from phosphoenolpyruvate (PEP) to the phosphoryl carrier protein (HPr). This is Phosphoenolpyruvate-protein phosphotransferase (ptsI) from Borreliella burgdorferi (strain ATCC 35210 / DSM 4680 / CIP 102532 / B31) (Borrelia burgdorferi).